The following is a 333-amino-acid chain: Fructose-1,6-bisphosphatase class 1 1 (333 aa).

Mg(2+) is bound by residues glutamate 81, aspartate 100, leucine 102, and aspartate 103. Residues 103–106 (DGSS) and asparagine 191 contribute to the substrate site. Glutamate 263 is a binding site for Mg(2+).

It belongs to the FBPase class 1 family. In terms of assembly, homotetramer. It depends on Mg(2+) as a cofactor.

It localises to the cytoplasm. It catalyses the reaction beta-D-fructose 1,6-bisphosphate + H2O = beta-D-fructose 6-phosphate + phosphate. It functions in the pathway carbohydrate biosynthesis; Calvin cycle. The polypeptide is Fructose-1,6-bisphosphatase class 1 1 (Cereibacter sphaeroides (strain ATCC 17029 / ATH 2.4.9) (Rhodobacter sphaeroides)).